We begin with the raw amino-acid sequence, 189 residues long: Large ribosomal subunit protein bL9 (189 aa).

Belongs to the bacterial ribosomal protein bL9 family.

In terms of biological role, binds to the 23S rRNA. This Methylocella silvestris (strain DSM 15510 / CIP 108128 / LMG 27833 / NCIMB 13906 / BL2) protein is Large ribosomal subunit protein bL9.